Here is a 288-residue protein sequence, read N- to C-terminus: Nucleotide-binding protein Tola_2941 (288 aa).

ATP is bound at residue 8–15 (GRSGSGKT). 56-59 (DVRN) lines the GTP pocket.

This sequence belongs to the RapZ-like family.

Displays ATPase and GTPase activities. This is Nucleotide-binding protein Tola_2941 from Tolumonas auensis (strain DSM 9187 / NBRC 110442 / TA 4).